Consider the following 96-residue polypeptide: Bublin coiled-coil protein (96 aa).

Residues 39 to 79 adopt a coiled-coil conformation; it reads NSCLDDIEDRNDALNGKLHELLESNRQARKDFRQQLNDEEA. The tract at residues 63 to 96 is disordered; sequence NRQARKDFRQQLNDEEASPPPAEDPASRDTQTED. Basic and acidic residues predominate over residues 87–96; sequence PASRDTQTED.

This sequence belongs to the UPF0184 (EST00098) family.

The protein resides in the cell junction. It localises to the cytoplasm. Its subcellular location is the cytoskeleton. Essential for intermediate filament organization in intestinal cells, interacts with intermediate filament and regulates intestinal lumen morphology. This Ctenopharyngodon idella (Grass carp) protein is Bublin coiled-coil protein (bbln).